Consider the following 606-residue polypeptide: MSDIIAYKLNGEIVDTQSIAGRESSAEPIYFDNSKEALHVIRHSCAHLMAQAIKSLYPKAKFFVGPNVEDGFYYDFRVDDEGTKLGESDLAAIEDKMKELAEKKFDIVKTCSTKANMSEKFKNDDLKQEVLKRIPDGEVSSYAQGDFEDLCRGPHLPNTKFLKFFKLTRVAGAYLGGDESREMLTRIYGTAYADKESLKEHIRIIEEAKKRDHRKLGVEMKLFTFDEEVGGGLPIWLPNGGRLRSKLEQLLYKAHRDRGYEPVRGPELLKADVWRRSGHYANYKENMYFTTIDETEYGIKPMNCVGHIKVYQSDIRSYRDLPLKFFEYGVVHRHEKSGVLHGLFRVREFAQDDSHIFCMPSQIKENILEILKFAGTIMENFGFHYEMEISTKPAKAIGGDEIWDTATKALKEALDENGFKYGIDEGGGAFYGPKIDIKITDALKRKWQCGTIQVDFNLPERFDLGYIDANNERQRPVMLHRALLGSFERFIGILLEHTAGELPFFIAPTQVVIVPISDAHLDYAKEISRELRKINVDSEIASKNESLNKRIRTAEKQRVPMIVVLGDNEVANKSVALRDRQARTQSDMSLAEFVNLTKEKLSEVHF.

Positions 212–503 (DHRKLGVEMK…LLEHTAGELP (292 aa)) are catalytic. The Zn(2+) site is built by Cys-304, His-355, and His-480.

Belongs to the class-II aminoacyl-tRNA synthetase family. In terms of assembly, homodimer. Requires Zn(2+) as cofactor.

It localises to the cytoplasm. It carries out the reaction tRNA(Thr) + L-threonine + ATP = L-threonyl-tRNA(Thr) + AMP + diphosphate + H(+). Functionally, catalyzes the attachment of threonine to tRNA(Thr) in a two-step reaction: L-threonine is first activated by ATP to form Thr-AMP and then transferred to the acceptor end of tRNA(Thr). Also edits incorrectly charged L-seryl-tRNA(Thr). The polypeptide is Threonine--tRNA ligase (Campylobacter concisus (strain 13826)).